Reading from the N-terminus, the 843-residue chain is Alpha-L-fucosidase 2 (843 aa).

An N-terminal signal peptide occupies residues Met1–Gly27. Residues Asn62, Asn253, Asn365, and Asn605 are each glycosylated (N-linked (GlcNAc...) asparagine).

It belongs to the glycosyl hydrolase 95 family. As to expression, ubiquitous. Highest expression in vascular tissues, leaf trichomes, root elongation zone and emerging lateral roots.

The protein resides in the secreted. The protein localises to the extracellular space. It localises to the apoplast. The catalysed reaction is an alpha-L-fucoside + H2O = L-fucose + an alcohol. Functionally, hydrolyzes alpha-1,2-linked fucose. Also active on fucosylated xyloglucan oligosaccharides. No activity with 3-fucosyllactose, p-nitrophenyl-alpha-I-fucopyranoside, lacto-N-fucopentaose II, lacto-N-fucopentaose III or alpha 1,6-fucosylated chitopentaose. Involved in apoplastic xyloglucan metabolism. The sequence is that of Alpha-L-fucosidase 2 (FUC95A) from Arabidopsis thaliana (Mouse-ear cress).